Consider the following 306-residue polypeptide: MNYEAEQPGANDDASGVAVALELARVLAKRKPAATIVFAAVAGEEQGLLGAQFMAQTFKNASVNVEGMLNVDLVGSSVGSRGEKEPNTVRLFCQGPPLTETPAQASQRLSIGGENDSPARQLGRFITEVAANKFTDMRVAMIYRLDRFLRGGDHRPFLEAGYAAVRFTEPNENFDHQHQDTRVEDGVQYGDLPEFLDYEYIARVAKVDLAAMWSLANAPAKVNNVRVNGTWLSNDSQLFWDPVNSTNLAGYEVVWRPTDAPLWTHALFVGDVRTATVELSKDNVIFGVRSVGKNGYKSPVTIPFPT.

The N-terminal stretch at Met1–Ala28 is a signal peptide. Residues Asp12 and Glu45 each contribute to the Zn(2+) site. Asn60 is a glycosylation site (N-linked (GlcNAc...) asparagine). Asp72 lines the Zn(2+) pocket. The Fibronectin type-III domain occupies Ala218 to Thr306. N-linked (GlcNAc...) asparagine glycans are attached at residues Asn228, Asn234, and Asn244.

It belongs to the peptidase M28 family. M28B subfamily. Zn(2+) serves as cofactor.

It is found in the secreted. This Verticillium alfalfae (strain VaMs.102 / ATCC MYA-4576 / FGSC 10136) (Verticillium wilt of alfalfa) protein is Probable zinc metalloprotease VDBG_06923.